A 268-amino-acid chain; its full sequence is Tryptophan synthase alpha chain (268 aa).

Catalysis depends on proton acceptor residues glutamate 49 and aspartate 60.

This sequence belongs to the TrpA family. As to quaternary structure, tetramer of two alpha and two beta chains.

It catalyses the reaction (1S,2R)-1-C-(indol-3-yl)glycerol 3-phosphate + L-serine = D-glyceraldehyde 3-phosphate + L-tryptophan + H2O. Its pathway is amino-acid biosynthesis; L-tryptophan biosynthesis; L-tryptophan from chorismate: step 5/5. Functionally, the alpha subunit is responsible for the aldol cleavage of indoleglycerol phosphate to indole and glyceraldehyde 3-phosphate. This chain is Tryptophan synthase alpha chain, found in Xanthomonas oryzae pv. oryzae (strain PXO99A).